The sequence spans 1021 residues: Chondroitin sulfate ABC endolyase (1021 aa).

The N-terminal stretch at 1 to 24 is a signal peptide; the sequence is MPIFRFTALAMTLGLLSAPYNAMA. Na(+)-binding residues include His43, Met70, Gln73, and Asp211. His501 serves as the catalytic Proton acceptor. The Proton donor role is filled by Tyr508.

The protein belongs to the polysaccharide lyase 8 family. Monomer.

It localises to the periplasm. It carries out the reaction Endolytic cleavage of (1-&gt;4)-beta-galactosaminic bonds between N-acetylgalactosamine and either D-glucuronic acid or L-iduronic acid to produce a mixture of Delta(4)-unsaturated oligosaccharides of different sizes that are ultimately degraded to Delta(4)-unsaturated tetra- and disaccharides.. With respect to regulation, is inhibited by Zn(2+), Ni(2+), Fe(2+) and Cu(2+). Endolytic, broad-specificity glycosaminoglycan lyase, which degrades the polysaccharides chondroitin, chondroitin-4-sulfate, chondroitin-6-sulfate, dermatan sulfate and to a lesser extent hyaluronan, by beta-elimination of 1,4-hexosaminidic bond to unsaturated tetrasaccharides and disaccharides. Is not active against keratan sulfate, heparan sulfate, and heparin. Is able to promote functional recovery in the injured central nervous system (CNS), via its role in the disruption of the normal organization of the extracellular matrix (ECM). The protein is Chondroitin sulfate ABC endolyase of Proteus vulgaris.